The following is a 525-amino-acid chain: uncharacterized protein (525 aa).

The signal sequence occupies residues 1-21 (MLECLSALLVLFAGGGGSVLA). The Extracellular segment spans residues 22–448 (AVQSKTVADP…ISAASQLDKR (427 aa)). Residues 242–264 (KVSSENCSKDTDDKSGSKKERNT) are disordered. A helical transmembrane segment spans residues 449–469 (IFIFTAITVSITTLMMLGFSY). Topologically, residues 470 to 525 (RSRVSFRDHSIDDSDDDNDWSDDEVEFDEEYFYSLPVSIPEKGISLDKMAQQLGVE) are cytoplasmic.

It localises to the membrane. This is an uncharacterized protein from Saccharomyces cerevisiae (strain ATCC 204508 / S288c) (Baker's yeast).